A 149-amino-acid chain; its full sequence is Calmodulin (149 aa).

Position 2 is an N-acetylalanine (A2). 4 consecutive EF-hand domains span residues E8–N43, P44–D79, D81–K116, and L117–K149. 19 residues coordinate Ca(2+): D21, D23, D25, T27, E32, D57, D59, N61, T63, E68, D94, D96, N98, E105, D130, D132, D134, Q136, and E141.

The protein belongs to the calmodulin family.

In terms of biological role, calmodulin mediates the control of a large number of enzymes, ion channels and other proteins by Ca(2+). Among the enzymes to be stimulated by the calmodulin-Ca(2+) complex are a number of protein kinases and phosphatases. This Achlya klebsiana protein is Calmodulin (CMD1).